A 173-amino-acid polypeptide reads, in one-letter code: VVLSKECAKPLATPKVTLNKRGFATTIATKNREMMVWQPFNNKMFETFSFLPPLTDEQISKQVDYILTNSWTPCLEFAASDQAYAGNENCIRMGPVASTYQDNRYWTMWKLPMFGCTDGSQVLSEIQACTKAFPDAYIRLVCFDANRQVQISGFLVHRPPSATDYRLPADRQV.

The transit peptide at 1-33 (VVLSKECAKPLATPKVTLNKRGFATTIATKNRE) directs the protein to the chloroplast.

The protein belongs to the RuBisCO small chain family. In terms of assembly, heterohexadecamer of 8 large and 8 small subunits.

It localises to the plastid. The protein resides in the chloroplast. Functionally, ruBisCO catalyzes two reactions: the carboxylation of D-ribulose 1,5-bisphosphate, the primary event in carbon dioxide fixation, as well as the oxidative fragmentation of the pentose substrate. Both reactions occur simultaneously and in competition at the same active site. Although the small subunit is not catalytic it is essential for maximal activity. The chain is Ribulose bisphosphate carboxylase small subunit, chloroplastic 2 from Acetabularia acetabulum (Mermaid's wine glass).